The chain runs to 597 residues: Elongation factor 4 (597 aa).

Residues 2–184 (DHIRNFSIIA…SLIAKVPPPK (183 aa)) enclose the tr-type G domain. GTP-binding positions include 14–19 (DHGKST) and 131–134 (NKID).

It belongs to the TRAFAC class translation factor GTPase superfamily. Classic translation factor GTPase family. LepA subfamily.

It is found in the cell inner membrane. It carries out the reaction GTP + H2O = GDP + phosphate + H(+). Its function is as follows. Required for accurate and efficient protein synthesis under certain stress conditions. May act as a fidelity factor of the translation reaction, by catalyzing a one-codon backward translocation of tRNAs on improperly translocated ribosomes. Back-translocation proceeds from a post-translocation (POST) complex to a pre-translocation (PRE) complex, thus giving elongation factor G a second chance to translocate the tRNAs correctly. Binds to ribosomes in a GTP-dependent manner. The polypeptide is Elongation factor 4 (Burkholderia pseudomallei (strain 1710b)).